Here is a 200-residue protein sequence, read N- to C-terminus: Recombination protein RecR (200 aa).

The C4-type zinc-finger motif lies at 58–75; that stretch reads CPCCFCLKNFPESQCEFC. One can recognise a Toprim domain in the interval 82 to 177; it reads STLCIVASPK…SISRLALGLP (96 aa).

It belongs to the RecR family.

Functionally, may play a role in DNA repair. It seems to be involved in an RecBC-independent recombinational process of DNA repair. It may act with RecF and RecO. The chain is Recombination protein RecR from Chlamydia felis (strain Fe/C-56) (Chlamydophila felis).